The primary structure comprises 49 residues: uncharacterized protein (49 aa).

This is an uncharacterized protein from Sinorhizobium fredii (strain NBRC 101917 / NGR234).